The sequence spans 483 residues: Cobyric acid synthase (483 aa).

A GATase cobBQ-type domain is found at 248-435 (VLKVVVPVLP…LHGLFETAAA (188 aa)). Catalysis depends on Cys-329, which acts as the Nucleophile. His-427 is an active-site residue.

The protein belongs to the CobB/CobQ family. CobQ subfamily.

Its pathway is cofactor biosynthesis; adenosylcobalamin biosynthesis. Its function is as follows. Catalyzes amidations at positions B, D, E, and G on adenosylcobyrinic A,C-diamide. NH(2) groups are provided by glutamine, and one molecule of ATP is hydrogenolyzed for each amidation. The sequence is that of Cobyric acid synthase from Pseudomonas fluorescens (strain SBW25).